The chain runs to 389 residues: Succinate--CoA ligase [ADP-forming] subunit beta (389 aa).

The ATP-grasp domain maps to 9 to 244; sequence KELLRQFNVP…IDEEDAAEIE (236 aa). Residues Lys46, 53 to 55, Glu99, Ala102, and Glu107 contribute to the ATP site; that span reads GRG. Mg(2+) is bound by residues Asn199 and Asp213. Residues Asn264 and 321–323 each bind substrate; that span reads GIM.

The protein belongs to the succinate/malate CoA ligase beta subunit family. In terms of assembly, heterotetramer of two alpha and two beta subunits. It depends on Mg(2+) as a cofactor.

It carries out the reaction succinate + ATP + CoA = succinyl-CoA + ADP + phosphate. The enzyme catalyses GTP + succinate + CoA = succinyl-CoA + GDP + phosphate. It participates in carbohydrate metabolism; tricarboxylic acid cycle; succinate from succinyl-CoA (ligase route): step 1/1. In terms of biological role, succinyl-CoA synthetase functions in the citric acid cycle (TCA), coupling the hydrolysis of succinyl-CoA to the synthesis of either ATP or GTP and thus represents the only step of substrate-level phosphorylation in the TCA. The beta subunit provides nucleotide specificity of the enzyme and binds the substrate succinate, while the binding sites for coenzyme A and phosphate are found in the alpha subunit. This is Succinate--CoA ligase [ADP-forming] subunit beta from Polynucleobacter asymbioticus (strain DSM 18221 / CIP 109841 / QLW-P1DMWA-1) (Polynucleobacter necessarius subsp. asymbioticus).